Here is a 479-residue protein sequence, read N- to C-terminus: uncharacterized protein (479 aa).

The next 10 helical transmembrane spans lie at 11–31 (ILMAIPLITFLLPAPDGLSLI), 43–63 (IVGLVLKPYGEPVILLAAIAV), 90–110 (GTTWLIFTAFTLSSAFVITGL), 151–171 (SGGIIFPIINSVVVALGSDPE), 195–215 (IFLTAMAPNALALSLMAPILG), 223–243 (WFLAASVPGLLCLFLIPLICY), 274–294 (KALSVLFVIALFGWIFSNSLH), 295–315 (INATIVAIIVMVLCIVLSIVT), 328–348 (TLVWYGGIIGMSGLLEKSGFF), and 447–467 (WWITGAIIAFGSLIIHLTIGM).

Belongs to the SLC13A/DASS transporter (TC 2.A.47) family. DIT1 subfamily.

The protein localises to the cell inner membrane. This is an uncharacterized protein from Haemophilus influenzae (strain ATCC 51907 / DSM 11121 / KW20 / Rd).